Reading from the N-terminus, the 225-residue chain is NAD(P)H-quinone oxidoreductase subunit K, chloroplastic (225 aa).

Positions 43, 44, 108, and 139 each coordinate [4Fe-4S] cluster.

It belongs to the complex I 20 kDa subunit family. NDH is composed of at least 16 different subunits, 5 of which are encoded in the nucleus. Requires [4Fe-4S] cluster as cofactor.

Its subcellular location is the plastid. The protein localises to the chloroplast thylakoid membrane. The catalysed reaction is a plastoquinone + NADH + (n+1) H(+)(in) = a plastoquinol + NAD(+) + n H(+)(out). It catalyses the reaction a plastoquinone + NADPH + (n+1) H(+)(in) = a plastoquinol + NADP(+) + n H(+)(out). In terms of biological role, NDH shuttles electrons from NAD(P)H:plastoquinone, via FMN and iron-sulfur (Fe-S) centers, to quinones in the photosynthetic chain and possibly in a chloroplast respiratory chain. The immediate electron acceptor for the enzyme in this species is believed to be plastoquinone. Couples the redox reaction to proton translocation, and thus conserves the redox energy in a proton gradient. In Platanus occidentalis (Sycamore), this protein is NAD(P)H-quinone oxidoreductase subunit K, chloroplastic.